Consider the following 431-residue polypeptide: UDP-N-acetylmuramate--L-alanine ligase (431 aa).

108-114 (GSHGKTS) contributes to the ATP binding site.

This sequence belongs to the MurCDEF family.

It localises to the cytoplasm. It catalyses the reaction UDP-N-acetyl-alpha-D-muramate + L-alanine + ATP = UDP-N-acetyl-alpha-D-muramoyl-L-alanine + ADP + phosphate + H(+). The protein operates within cell wall biogenesis; peptidoglycan biosynthesis. Cell wall formation. This is UDP-N-acetylmuramate--L-alanine ligase from Exiguobacterium sibiricum (strain DSM 17290 / CCUG 55495 / CIP 109462 / JCM 13490 / 255-15).